The primary structure comprises 492 residues: AAA-ATPase At3g28520 (492 aa).

A helical membrane pass occupies residues isoleucine 7–tyrosine 25. Glycine 249–serine 256 is an ATP binding site. Disordered regions lie at residues lysine 313–valine 334 and lysine 462–lysine 492. 2 stretches are compositionally biased toward basic and acidic residues: residues glutamate 323–lysine 332 and lysine 462–asparagine 484.

This sequence belongs to the AAA ATPase family. BCS1 subfamily. The cofactor is Mg(2+).

The protein localises to the membrane. It carries out the reaction ATP + H2O = ADP + phosphate + H(+). This Arabidopsis thaliana (Mouse-ear cress) protein is AAA-ATPase At3g28520.